The sequence spans 98 residues: NADH-ubiquinone oxidoreductase chain 4L (98 aa).

The next 3 membrane-spanning stretches (helical) occupy residues 2-22 (PSIS…MLMF), 29-49 (SLLC…LIIL), and 61-81 (ILLL…LVMV).

It belongs to the complex I subunit 4L family. In terms of assembly, core subunit of respiratory chain NADH dehydrogenase (Complex I) which is composed of 45 different subunits.

The protein resides in the mitochondrion inner membrane. It carries out the reaction a ubiquinone + NADH + 5 H(+)(in) = a ubiquinol + NAD(+) + 4 H(+)(out). In terms of biological role, core subunit of the mitochondrial membrane respiratory chain NADH dehydrogenase (Complex I) which catalyzes electron transfer from NADH through the respiratory chain, using ubiquinone as an electron acceptor. Part of the enzyme membrane arm which is embedded in the lipid bilayer and involved in proton translocation. This Microcebus griseorufus (Gray-brown mouse lemur) protein is NADH-ubiquinone oxidoreductase chain 4L (MT-ND4L).